A 157-amino-acid chain; its full sequence is uncharacterized protein (157 aa).

One can recognise an N-acetyltransferase domain in the interval 9-146; the sequence is LLINYKTLDE…GDFYVWHPET (138 aa).

This is an uncharacterized protein from Bacillus cereus (strain ZK / E33L).